The primary structure comprises 38 residues: Spheniscin-1 (38 aa).

Disulfide bonds link cysteine 5-cysteine 33, cysteine 12-cysteine 27, and cysteine 17-cysteine 34.

In terms of assembly, monomer. Secreted into the stomach cavity.

The protein localises to the secreted. In terms of biological role, has antifungal activity and antibacterial activity against Gram-positive and Gram-negative bacteria. Involved in the process of food preservation in the stomach during the incubation fast. May also be present during infection. The polypeptide is Spheniscin-1 (Aptenodytes patagonicus (King penguin)).